We begin with the raw amino-acid sequence, 123 residues long: uncharacterized protein (123 aa).

Positions methionine 1–glycine 28 are disordered. A compositionally biased stretch (basic and acidic residues) spans lysine 7–threonine 20.

This sequence belongs to the TUSC2 family.

This is an uncharacterized protein from Caenorhabditis elegans.